A 247-amino-acid chain; its full sequence is UPF0259 membrane protein BUAP5A_271 (247 aa).

Transmembrane regions (helical) follow at residues 20-40, 85-105, 114-134, 137-157, 188-208, and 218-238; these read IGAI…IDMF, IMES…LISV, IVSS…LNFL, FIIQ…SIIL, IIGP…MLLA, and LFLI…IYLF.

It belongs to the UPF0259 family.

Its subcellular location is the cell membrane. The chain is UPF0259 membrane protein BUAP5A_271 from Buchnera aphidicola subsp. Acyrthosiphon pisum (strain 5A).